Reading from the N-terminus, the 172-residue chain is Adenylate kinase isoenzyme 6 (172 aa).

ATP is bound by residues Gly13, Gly15, Lys16, Thr17, and Thr18. The segment at 33–56 (NVGDLAREGHLYDGYDEEYGCPIL) is NMPbind. An LID region spans residues 108 to 118 (TRGYHEKKLQD). Position 109 (Arg109) interacts with ATP.

Belongs to the adenylate kinase family. AK6 subfamily. In terms of assembly, monomer and homodimer. Interacts with small ribosomal subunit protein uS11. Not a structural component of 43S pre-ribosomes, but transiently interacts with them by binding to uS11. Interacts with COIL (via C-terminus).

Its subcellular location is the cytoplasm. It is found in the nucleus. It localises to the nucleoplasm. The protein localises to the cajal body. The catalysed reaction is AMP + ATP = 2 ADP. The enzyme catalyses ATP + H2O = ADP + phosphate + H(+). In terms of biological role, broad-specificity nucleoside monophosphate (NMP) kinase that catalyzes the reversible transfer of the terminal phosphate group between nucleoside triphosphates and monophosphates. Also has ATPase activity. Involved in the late cytoplasmic maturation steps of the 40S ribosomal particles, specifically 18S rRNA maturation. While NMP activity is not required for ribosome maturation, ATPase activity is. Associates transiently with small ribosomal subunit protein uS11. ATP hydrolysis breaks the interaction with uS11. May temporarily remove uS11 from the ribosome to enable a conformational change of the ribosomal RNA that is needed for the final maturation step of the small ribosomal subunit. Its NMP activity may have a role in nuclear energy homeostasis. May be involved in regulation of Cajal body (CB) formation. The sequence is that of Adenylate kinase isoenzyme 6 from Rattus norvegicus (Rat).